The following is a 208-amino-acid chain: Large ribosomal subunit protein uL3 (208 aa).

This sequence belongs to the universal ribosomal protein uL3 family. Part of the 50S ribosomal subunit. Forms a cluster with proteins L14 and L19.

One of the primary rRNA binding proteins, it binds directly near the 3'-end of the 23S rRNA, where it nucleates assembly of the 50S subunit. In Salinibacter ruber (strain DSM 13855 / M31), this protein is Large ribosomal subunit protein uL3.